The primary structure comprises 144 residues: Catabolic 3-dehydroquinase (144 aa).

The active-site Proton acceptor is the Y24. Residues N76, H82, and D89 each coordinate substrate. H102 (proton donor) is an active-site residue. Substrate contacts are provided by residues 103-104 (IT) and R113.

The protein belongs to the type-II 3-dehydroquinase family. Homododecamer. Adopts a ring-like structure, composed of an arrangement of two hexameric rings stacked on top of one another.

It carries out the reaction 3-dehydroquinate = 3-dehydroshikimate + H2O. It participates in aromatic compound metabolism; 3,4-dihydroxybenzoate biosynthesis; 3,4-dihydroxybenzoate from 3-dehydroquinate: step 1/2. In terms of biological role, is involved in the catabolism of quinate. Allows the utilization of quinate as carbon source via the beta-ketoadipate pathway. The polypeptide is Catabolic 3-dehydroquinase (Debaryomyces hansenii (strain ATCC 36239 / CBS 767 / BCRC 21394 / JCM 1990 / NBRC 0083 / IGC 2968) (Yeast)).